We begin with the raw amino-acid sequence, 305 residues long: Putative HTH-type transcriptional regulatory protein Saci_1344 (305 aa).

Positions 128 to 183 (LREKREEKNMSLGELSQRLGVSRISVYDYEKEDSYVSIEVAEKLIEIFGDEVIGDI) constitute an HTH cro/C1-type domain. Residues 139-158 (LGELSQRLGVSRISVYDYEK) constitute a DNA-binding region (H-T-H motif).

This chain is Putative HTH-type transcriptional regulatory protein Saci_1344, found in Sulfolobus acidocaldarius (strain ATCC 33909 / DSM 639 / JCM 8929 / NBRC 15157 / NCIMB 11770).